The sequence spans 554 residues: DNA ligase B (554 aa).

Lys-122 (N6-AMP-lysine intermediate) is an active-site residue.

The protein belongs to the NAD-dependent DNA ligase family. LigB subfamily.

It carries out the reaction NAD(+) + (deoxyribonucleotide)n-3'-hydroxyl + 5'-phospho-(deoxyribonucleotide)m = (deoxyribonucleotide)n+m + AMP + beta-nicotinamide D-nucleotide.. In terms of biological role, catalyzes the formation of phosphodiester linkages between 5'-phosphoryl and 3'-hydroxyl groups in double-stranded DNA using NAD as a coenzyme and as the energy source for the reaction. This Pseudomonas fluorescens (strain SBW25) protein is DNA ligase B.